The chain runs to 440 residues: Xaa-Pro dipeptidase (440 aa).

Mn(2+) is bound by residues D244, D255, H335, E380, and E419.

Belongs to the peptidase M24B family. Bacterial-type prolidase subfamily. Requires Mn(2+) as cofactor.

It catalyses the reaction Xaa-L-Pro dipeptide + H2O = an L-alpha-amino acid + L-proline. Its function is as follows. Splits dipeptides with a prolyl residue in the C-terminal position. This chain is Xaa-Pro dipeptidase, found in Shewanella loihica (strain ATCC BAA-1088 / PV-4).